Reading from the N-terminus, the 725-residue chain is Ribonuclease R (725 aa).

The 324-residue stretch at 236–559 (RKDLRDKLII…QLHRLIKQMV (324 aa)) folds into the RNB domain. The S1 motif domain occupies 611 to 689 (GKSLKAQIVS…NLGKVDVVLE (79 aa)).

Belongs to the RNR ribonuclease family. RNase R subfamily.

The protein localises to the cytoplasm. The enzyme catalyses Exonucleolytic cleavage in the 3'- to 5'-direction to yield nucleoside 5'-phosphates.. 3'-5' exoribonuclease that releases 5'-nucleoside monophosphates and is involved in maturation of structured RNAs. The polypeptide is Ribonuclease R (Mycoplasmopsis pulmonis (strain UAB CTIP) (Mycoplasma pulmonis)).